Reading from the N-terminus, the 75-residue chain is Sec-independent protein translocase protein TatA (75 aa).

The helical transmembrane segment at 1–21 (MGSFSIWHWLVVLAIVLLVFG) threads the bilayer. Residues 41–75 (KGMRDEDKPNAQLGDESRTQDASRTAQDEHDRNAR) form a disordered region.

The protein belongs to the TatA/E family. The Tat system comprises two distinct complexes: a TatABC complex, containing multiple copies of TatA, TatB and TatC subunits, and a separate TatA complex, containing only TatA subunits. Substrates initially bind to the TatABC complex, which probably triggers association of the separate TatA complex to form the active translocon.

Its subcellular location is the cell inner membrane. In terms of biological role, part of the twin-arginine translocation (Tat) system that transports large folded proteins containing a characteristic twin-arginine motif in their signal peptide across membranes. TatA could form the protein-conducting channel of the Tat system. The chain is Sec-independent protein translocase protein TatA from Stenotrophomonas maltophilia (strain K279a).